We begin with the raw amino-acid sequence, 357 residues long: Phospho-N-acetylmuramoyl-pentapeptide-transferase (357 aa).

A run of 10 helical transmembrane segments spans residues 23 to 43 (AIFS…YFIY), 70 to 90 (TMGG…YCNL), 91 to 111 (SNIY…IGFI), 127 to 147 (LKWK…MIKI), 171 to 191 (YLYI…VNLT), 196 to 216 (GLAI…SLFS), 236 to 256 (LAIL…FNSY), 260 to 280 (VFMG…IAIL), 286 to 306 (LLII…LQII), and 334 to 354 (LIIV…LISL).

This sequence belongs to the glycosyltransferase 4 family. MraY subfamily. The cofactor is Mg(2+).

It is found in the cell inner membrane. The catalysed reaction is UDP-N-acetyl-alpha-D-muramoyl-L-alanyl-gamma-D-glutamyl-meso-2,6-diaminopimeloyl-D-alanyl-D-alanine + di-trans,octa-cis-undecaprenyl phosphate = di-trans,octa-cis-undecaprenyl diphospho-N-acetyl-alpha-D-muramoyl-L-alanyl-D-glutamyl-meso-2,6-diaminopimeloyl-D-alanyl-D-alanine + UMP. Its pathway is cell wall biogenesis; peptidoglycan biosynthesis. In terms of biological role, catalyzes the initial step of the lipid cycle reactions in the biosynthesis of the cell wall peptidoglycan: transfers peptidoglycan precursor phospho-MurNAc-pentapeptide from UDP-MurNAc-pentapeptide onto the lipid carrier undecaprenyl phosphate, yielding undecaprenyl-pyrophosphoryl-MurNAc-pentapeptide, known as lipid I. The polypeptide is Phospho-N-acetylmuramoyl-pentapeptide-transferase (Buchnera aphidicola subsp. Acyrthosiphon pisum (strain APS) (Acyrthosiphon pisum symbiotic bacterium)).